Here is a 584-residue protein sequence, read N- to C-terminus: uncharacterized protein (584 aa).

3 disordered regions span residues 123-156 (LSCSSSSPSSSSSSSSSSPRLISTPPIISTPSSP), 209-264 (KIVT…INGG), and 355-479 (STQL…ITPT). 2 stretches are compositionally biased toward low complexity: residues 237–260 (SLSFKSPCSSPSSSSSSTTTPKSS) and 366–376 (SISAATTTTIT). Polar residues-rich tracts occupy residues 377 to 388 (PHNNNSTMTTKT) and 395 to 419 (DTSNLSTPKSTSSTINKAFTTSTTP). Positions 425–479 (MSMTPLSSSSSSSTTPSKFINPLPSSSSKTTTTITNSKRLSTLSKPSPITPITPT) are enriched in low complexity.

This is an uncharacterized protein from Dictyostelium discoideum (Social amoeba).